The chain runs to 114 residues: Nucleoid-associated protein CKL_3826 (114 aa).

This sequence belongs to the YbaB/EbfC family. As to quaternary structure, homodimer.

The protein resides in the cytoplasm. The protein localises to the nucleoid. In terms of biological role, binds to DNA and alters its conformation. May be involved in regulation of gene expression, nucleoid organization and DNA protection. This chain is Nucleoid-associated protein CKL_3826, found in Clostridium kluyveri (strain ATCC 8527 / DSM 555 / NBRC 12016 / NCIMB 10680 / K1).